The primary structure comprises 94 residues: Small ribosomal subunit protein bS6 (94 aa).

The protein belongs to the bacterial ribosomal protein bS6 family.

Its function is as follows. Binds together with bS18 to 16S ribosomal RNA. The protein is Small ribosomal subunit protein bS6 of Phytoplasma mali (strain AT).